The chain runs to 592 residues: Delta-like protein 3 (592 aa).

Residues 1 to 32 (MVSLQVSPLSQTLILAFLLPQALPAGVFELQI) form the signal peptide. The Extracellular portion of the chain corresponds to 33–490 (HSFGPGPGLG…LRQADPQRFL (458 aa)). Residues 174-213 (ARCEPPAVGAACARLCRSRSAPSRCGPGLRPCTPFPDECE) form the DSL domain. EGF-like domains follow at residues 214-247 (APSV…PLCT), 272-308 (GPGP…LRCE), 310-349 (SGVT…SNCE), 351-387 (RVDR…PRCE), 389-425 (DLDD…RDCR), and 427-463 (RADP…VRCE). Disulfide bonds link Cys-218–Cys-229, Cys-222–Cys-235, Cys-237–Cys-246, Cys-276–Cys-287, Cys-281–Cys-296, Cys-298–Cys-307, Cys-314–Cys-325, Cys-319–Cys-337, Cys-339–Cys-348, Cys-355–Cys-366, Cys-360–Cys-375, Cys-377–Cys-386, Cys-393–Cys-404, Cys-398–Cys-413, Cys-415–Cys-424, Cys-431–Cys-442, Cys-436–Cys-451, and Cys-453–Cys-462. The helical transmembrane segment at 491 to 511 (LPPALGLLVAAGLAGAALLVI) threads the bilayer. At 512–592 (HVRRRGPGQD…REDWLIQVLF (81 aa)) the chain is on the cytoplasmic side. The tract at residues 548-567 (QDGAGDGPSSSADWNHPEDG) is disordered.

Can bind and activate Notch-1 or another Notch receptor. Post-translationally, ubiquitinated by MIB (MIB1 or MIB2), leading to its endocytosis and subsequent degradation. In terms of tissue distribution, predominantly expressed in the neuroectoderm and paraxial mesoderm during embryogenesis.

It is found in the membrane. Inhibits primary neurogenesis. May be required to divert neurons along a specific differentiation pathway. Plays a role in the formation of somite boundaries during segmentation of the paraxial mesoderm. The polypeptide is Delta-like protein 3 (Dll3) (Mus musculus (Mouse)).